We begin with the raw amino-acid sequence, 1368 residues long: DNA-directed RNA polymerase subunit beta' (1368 aa).

The tract at residues 1 to 38 (MTSSSKPARKTSKSKSKASKAAEAPAAPSNELSREAPT) is disordered. Residues 7–18 (PARKTSKSKSKA) are compositionally biased toward basic residues. Positions 19–29 (SKAAEAPAAPS) are enriched in low complexity. Positions 250, 318, 325, and 328 each coordinate Zn(2+). A disordered region spans residues 1340-1368 (AGEELAEEHVPDPGALEGLQEEGLLSQDS). Residues 1353–1368 (GALEGLQEEGLLSQDS) are compositionally biased toward low complexity.

The protein belongs to the RNA polymerase beta' chain family. RpoC2 subfamily. In cyanobacteria the RNAP catalytic core is composed of 2 alpha, 1 beta, 1 beta', 1 gamma and 1 omega subunit. When a sigma factor is associated with the core the holoenzyme is formed, which can initiate transcription. It depends on Zn(2+) as a cofactor.

It carries out the reaction RNA(n) + a ribonucleoside 5'-triphosphate = RNA(n+1) + diphosphate. DNA-dependent RNA polymerase catalyzes the transcription of DNA into RNA using the four ribonucleoside triphosphates as substrates. The sequence is that of DNA-directed RNA polymerase subunit beta' from Synechococcus sp. (strain RCC307).